A 239-amino-acid polypeptide reads, in one-letter code: Large ribosomal subunit protein uL2 (239 aa).

Disordered regions lie at residues 1–20 and 203–239; these read MGKSLIQQRRGKGSPTFRSP and PFGGKEHHPGKPTTTSRRAPPGRKVGHIAARRTGRRK. Residues 222–239 are compositionally biased toward basic residues; the sequence is PPGRKVGHIAARRTGRRK.

This sequence belongs to the universal ribosomal protein uL2 family. As to quaternary structure, part of the 50S ribosomal subunit. Forms a bridge to the 30S subunit in the 70S ribosome.

Its function is as follows. One of the primary rRNA binding proteins. Required for association of the 30S and 50S subunits to form the 70S ribosome, for tRNA binding and peptide bond formation. It has been suggested to have peptidyltransferase activity; this is somewhat controversial. Makes several contacts with the 16S rRNA in the 70S ribosome. The chain is Large ribosomal subunit protein uL2 from Pyrococcus horikoshii (strain ATCC 700860 / DSM 12428 / JCM 9974 / NBRC 100139 / OT-3).